A 629-amino-acid chain; its full sequence is tRNA uridine 5-carboxymethylaminomethyl modification enzyme MnmG (629 aa).

FAD is bound by residues 13–18, valine 125, and serine 180; that span reads GGGHAG. 273-287 serves as a coordination point for NAD(+); the sequence is GPRYCPSIEDKVMRF. Glutamine 370 is a binding site for FAD.

This sequence belongs to the MnmG family. Homodimer. Heterotetramer of two MnmE and two MnmG subunits. FAD serves as cofactor.

It localises to the cytoplasm. NAD-binding protein involved in the addition of a carboxymethylaminomethyl (cmnm) group at the wobble position (U34) of certain tRNAs, forming tRNA-cmnm(5)s(2)U34. In Salmonella agona (strain SL483), this protein is tRNA uridine 5-carboxymethylaminomethyl modification enzyme MnmG.